The sequence spans 166 residues: Transcriptional repressor NrdR (166 aa).

A zinc finger lies at Cys3–Cys34. Residues Leu46–Asp136 enclose the ATP-cone domain.

It belongs to the NrdR family. The cofactor is Zn(2+).

Negatively regulates transcription of bacterial ribonucleotide reductase nrd genes and operons by binding to NrdR-boxes. The protein is Transcriptional repressor NrdR of Paenarthrobacter aurescens (strain TC1).